A 333-amino-acid polypeptide reads, in one-letter code: Thiamine-monophosphate kinase (333 aa).

Positions 44, 58, 59, and 60 each coordinate Mg(2+). Residue His67 participates in substrate binding. 2 residues coordinate Mg(2+): Asp89 and Asp137. ATP contacts are provided by residues Gly136 to Asp137 and Arg162. Position 224 (Asp224) interacts with Mg(2+). ATP is bound at residue Ser226. A Mg(2+)-binding site is contributed by Asp227. Substrate is bound by residues Glu278 and Trp320.

It belongs to the thiamine-monophosphate kinase family.

It carries out the reaction thiamine phosphate + ATP = thiamine diphosphate + ADP. It participates in cofactor biosynthesis; thiamine diphosphate biosynthesis; thiamine diphosphate from thiamine phosphate: step 1/1. Catalyzes the ATP-dependent phosphorylation of thiamine-monophosphate (TMP) to form thiamine-pyrophosphate (TPP), the active form of vitamin B1. This is Thiamine-monophosphate kinase from Mycobacterium tuberculosis (strain CDC 1551 / Oshkosh).